Consider the following 41-residue polypeptide: Urotensin-1 (41 aa).

Val-41 is subject to Valine amide.

Belongs to the sauvagine/corticotropin-releasing factor/urotensin I family.

The protein localises to the secreted. Its function is as follows. Urotensin is found in the teleost caudal neurosecretory system. It has a suggested role in osmoregulation and as a corticotropin-releasing factor. This chain is Urotensin-1, found in Catostomus commersonii (White sucker).